Here is a 314-residue protein sequence, read N- to C-terminus: MNEQVEAFLRHLADERNLSANTIAAYRTDLEQFCEFLHGRRLFAWHDVTHDDVLAFLIDLRERRYASSTVARRVAAVKSFFTFLTGRGIVQRDPTERIDSPKVDRDLPRALTPRQVDELLELPLRSPTPERIRDKAMLELLYATGVRVSELVALNVNDVDLERNEVRCIGKNGRVRVLPINGSAATALEEYFDISRNQLARGSGSSTEALFLNHRGKRLTRQGFWLILKQYAEELGLSDLTPHVLRHSFAVHMLNAGFDLRAVQELLGHTSISTTQIYTHLNHESSHTPHAHPAPRASEVNGVRDEQALVPEEK.

One can recognise a Core-binding (CB) domain in the interval 1-85 (MNEQVEAFLR…AVKSFFTFLT (85 aa)). Residues 106-291 (DLPRALTPRQ…NHESSHTPHA (186 aa)) enclose the Tyr recombinase domain. Active-site residues include R147, K171, H243, R246, and H269. The active-site O-(3'-phospho-DNA)-tyrosine intermediate is Y278. The tract at residues 284-314 (ESSHTPHAHPAPRASEVNGVRDEQALVPEEK) is disordered. Positions 302–314 (GVRDEQALVPEEK) are enriched in basic and acidic residues.

Belongs to the 'phage' integrase family. XerC subfamily. Forms a cyclic heterotetrameric complex composed of two molecules of XerC and two molecules of XerD.

It localises to the cytoplasm. Site-specific tyrosine recombinase, which acts by catalyzing the cutting and rejoining of the recombining DNA molecules. The XerC-XerD complex is essential to convert dimers of the bacterial chromosome into monomers to permit their segregation at cell division. It also contributes to the segregational stability of plasmids. The polypeptide is Tyrosine recombinase XerC (Roseiflexus castenholzii (strain DSM 13941 / HLO8)).